The primary structure comprises 473 residues: Glutamate--tRNA ligase (473 aa).

Residues 10–20 carry the 'HIGH' region motif; the sequence is PSPTGYLHLGN. The Zn(2+) site is built by cysteine 98, cysteine 100, cysteine 125, and histidine 127. The short motif at 242–246 is the 'KMSKS' region element; sequence KLSKR. Lysine 245 is an ATP binding site.

This sequence belongs to the class-I aminoacyl-tRNA synthetase family. Glutamate--tRNA ligase type 1 subfamily. Monomer. The cofactor is Zn(2+).

It is found in the cytoplasm. The catalysed reaction is tRNA(Glu) + L-glutamate + ATP = L-glutamyl-tRNA(Glu) + AMP + diphosphate. Its function is as follows. Catalyzes the attachment of glutamate to tRNA(Glu) in a two-step reaction: glutamate is first activated by ATP to form Glu-AMP and then transferred to the acceptor end of tRNA(Glu). The protein is Glutamate--tRNA ligase of Aquifex aeolicus (strain VF5).